Reading from the N-terminus, the 89-residue chain is Small ribosomal subunit protein uS14 (89 aa).

It belongs to the universal ribosomal protein uS14 family. As to quaternary structure, part of the 30S ribosomal subunit. Contacts proteins S3 and S10.

Functionally, binds 16S rRNA, required for the assembly of 30S particles and may also be responsible for determining the conformation of the 16S rRNA at the A site. The protein is Small ribosomal subunit protein uS14 of Leuconostoc mesenteroides subsp. mesenteroides (strain ATCC 8293 / DSM 20343 / BCRC 11652 / CCM 1803 / JCM 6124 / NCDO 523 / NBRC 100496 / NCIMB 8023 / NCTC 12954 / NRRL B-1118 / 37Y).